The primary structure comprises 434 residues: UDP-N-acetylglucosamine 1-carboxyvinyltransferase (434 aa).

22–23 contributes to the phosphoenolpyruvate binding site; the sequence is KN. R97 contributes to the UDP-N-acetyl-alpha-D-glucosamine binding site. Residue D121 is the Proton donor of the active site. Residues D319 and M341 each coordinate UDP-N-acetyl-alpha-D-glucosamine.

This sequence belongs to the EPSP synthase family. MurA subfamily.

The protein resides in the cytoplasm. It carries out the reaction phosphoenolpyruvate + UDP-N-acetyl-alpha-D-glucosamine = UDP-N-acetyl-3-O-(1-carboxyvinyl)-alpha-D-glucosamine + phosphate. Its pathway is cell wall biogenesis; peptidoglycan biosynthesis. Cell wall formation. Adds enolpyruvyl to UDP-N-acetylglucosamine. The chain is UDP-N-acetylglucosamine 1-carboxyvinyltransferase from Bacteroides thetaiotaomicron (strain ATCC 29148 / DSM 2079 / JCM 5827 / CCUG 10774 / NCTC 10582 / VPI-5482 / E50).